Reading from the N-terminus, the 60-residue chain is LKCHKLVPPVWKTCPEGKNLCYKMFMVSTSTVPVKRGCIDVCPKDSALVKYVCCSTDKCN.

4 cysteine pairs are disulfide-bonded: C3–C21, C14–C38, C42–C53, and C54–C59.

The protein belongs to the three-finger toxin family. Short-chain subfamily. Type IA cytotoxin sub-subfamily. In terms of assembly, monomer in solution; Homodimer and oligomer in the presence of negatively charged lipids forming a pore with a size ranging between 20 and 30 Angstroms. As to expression, expressed by the venom gland.

It localises to the secreted. The protein localises to the target cell membrane. In terms of biological role, shows cytolytic activity on many different cells by forming pore in lipid membranes. In vivo, increases heart rate or kills the animal by cardiac arrest. In addition, it binds to heparin with high affinity, interacts with Kv channel-interacting protein 1 (KCNIP1) in a calcium-independent manner, and binds to integrin alpha-V/beta-3 (ITGAV/ITGB3) with moderate affinity. This chain is Cytotoxin 1, found in Naja nivea (Cape cobra).